Reading from the N-terminus, the 388-residue chain is Chorismate synthase (388 aa).

Arg39 and Arg45 together coordinate NADP(+). FMN contacts are provided by residues 130–132 (RSS), 251–252 (NA), Gly296, 311–315 (KPIPT), and Arg337.

It belongs to the chorismate synthase family. Homotetramer. It depends on FMNH2 as a cofactor.

The catalysed reaction is 5-O-(1-carboxyvinyl)-3-phosphoshikimate = chorismate + phosphate. It functions in the pathway metabolic intermediate biosynthesis; chorismate biosynthesis; chorismate from D-erythrose 4-phosphate and phosphoenolpyruvate: step 7/7. Catalyzes the anti-1,4-elimination of the C-3 phosphate and the C-6 proR hydrogen from 5-enolpyruvylshikimate-3-phosphate (EPSP) to yield chorismate, which is the branch point compound that serves as the starting substrate for the three terminal pathways of aromatic amino acid biosynthesis. This reaction introduces a second double bond into the aromatic ring system. The polypeptide is Chorismate synthase (Streptococcus pyogenes serotype M2 (strain MGAS10270)).